The following is a 71-amino-acid chain: uncharacterized protein (71 aa).

This is an uncharacterized protein from Saccharomyces cerevisiae (strain ATCC 204508 / S288c) (Baker's yeast).